The chain runs to 831 residues: Probable DNA-directed RNA polymerase (831 aa).

Catalysis depends on residues Asp490, Lys560, and Asp738.

It belongs to the phage and mitochondrial RNA polymerase family.

It localises to the mitochondrion. The enzyme catalyses RNA(n) + a ribonucleoside 5'-triphosphate = RNA(n+1) + diphosphate. In terms of biological role, DNA-dependent RNA polymerase catalyzes the transcription of DNA into RNA using the four ribonucleoside triphosphates as substrates. This is Probable DNA-directed RNA polymerase from Gelasinospora sp. (strain G114).